The following is a 245-amino-acid chain: Dehydrogenase/reductase SDR family member 6 (245 aa).

NAD(+)-binding positions include 16-18 (QGI), D37, and D58. A substrate-binding site is contributed by R144. Residue Y147 is the Proton acceptor of the active site. NAD(+) is bound by residues K151 and 180 to 184 (VDTPS). Residues R188 and R205 each contribute to the substrate site.

The protein belongs to the short-chain dehydrogenases/reductases (SDR) family. Homotetramer.

It is found in the cytoplasm. It carries out the reaction cis-4-hydroxy-L-proline + NAD(+) = 4-oxo-L-proline + NADH + H(+). It catalyses the reaction (R)-3-hydroxybutanoate + NAD(+) = acetoacetate + NADH + H(+). Its pathway is amino-acid metabolism. The protein operates within siderophore biosynthesis. Functionally, NAD(H)-dependent dehydrogenase/reductase with a preference for cyclic substrates. Catalyzes stereoselective conversion of 4-oxo-L-proline to cis-4-hydroxy-L-proline, likely a detoxification mechanism for ketoprolines. Mediates the formation of 2,5-dihydroxybenzoate (2,5-DHBA), a siderophore that chelates free cytoplasmic iron, thereby regulating iron transport and homeostasis while protecting cells against free radical-induced oxidative stress. The iron-siderophore complex is imported into mitochondria, providing an iron source for mitochondrial metabolic processes in particular heme synthesis. May act as a 3-hydroxybutyrate dehydrogenase. The polypeptide is Dehydrogenase/reductase SDR family member 6 (bdh2) (Aquarana catesbeiana (American bullfrog)).